The sequence spans 177 residues: Ribosome maturation factor RimP (177 aa).

It belongs to the RimP family.

The protein resides in the cytoplasm. Required for maturation of 30S ribosomal subunits. The chain is Ribosome maturation factor RimP from Mycobacterium marinum (strain ATCC BAA-535 / M).